Reading from the N-terminus, the 210-residue chain is Histone H1A (210 aa).

Disordered stretches follow at residues 1–49 (MAEA…VSEQ) and 101–210 (KGSG…PKKK). Low complexity-rich tracts occupy residues 26 to 45 (KKAA…SGPS) and 129 to 142 (PLAA…AAAK). The H15 domain maps to 42-113 (SGPSVSEQIV…GASGSFKLNK (72 aa)). Basic residues-rich tracts occupy residues 143 to 153 (KTAKSPKKPKK) and 160 to 180 (SPKK…KTAV). Over residues 181–192 (KPKVAAKSPAKA) the composition is skewed to low complexity. Residues 193–210 (KAAKPKVAKAKKAAPKKK) show a composition bias toward basic residues.

Belongs to the histone H1/H5 family.

The protein resides in the nucleus. The protein localises to the chromosome. Its function is as follows. Histones H1 are necessary for the condensation of nucleosome chains into higher-order structures. This is Histone H1A from Xenopus laevis (African clawed frog).